We begin with the raw amino-acid sequence, 128 residues long: uncharacterized protein (128 aa).

Helical transmembrane passes span 5 to 25 (ILAL…YSMM), 27 to 47 (PVLV…PLFL), 60 to 80 (QLWW…FIGL), and 87 to 107 (SAVT…HFFF). One can recognise an EamA domain in the interval 9-110 (LIWSSSLIVG…FVGHFFFKTK (102 aa)).

It is found in the cell membrane. This is an uncharacterized protein from Haemophilus influenzae (strain ATCC 51907 / DSM 11121 / KW20 / Rd).